Here is a 38-residue protein sequence, read N- to C-terminus: NAD-reducing hydrogenase HoxS subunit beta (38 aa).

It belongs to the [NiFe]/[NiFeSe] hydrogenase large subunit family. In terms of assembly, tetramer of an alpha and a gamma subunits (flavin-containing dimer), and a delta and a nickel-containing beta subunits (hydrogenase dimer). The cofactor is FMN. Ni(2+) serves as cofactor.

It localises to the cytoplasm. It catalyses the reaction H2 + NAD(+) = NADH + H(+). The protein is NAD-reducing hydrogenase HoxS subunit beta (hoxH) of Rhodococcus opacus (Nocardia opaca).